We begin with the raw amino-acid sequence, 163 residues long: Protein FAM167B (163 aa).

Residues 73–132 (FDSMDSALEWLRRELREMQAQDRQLAGQLLRLRAQLHRLKMDQACHLHQELLDEAELELE) are a coiled coil.

The protein belongs to the FAM167 (SEC) family.

This Homo sapiens (Human) protein is Protein FAM167B (FAM167B).